A 349-amino-acid polypeptide reads, in one-letter code: NADH-quinone oxidoreductase subunit H (349 aa).

Transmembrane regions (helical) follow at residues 14 to 34, 85 to 105, 120 to 140, 164 to 184, 196 to 216, 243 to 263, 285 to 305, and 324 to 344; these read LLVWTLLKIIAIVLPMLGCVA, GLFLLAPVLSIGPALAAWAVI, LLYILALTSMGVYGVIIAGWA, MGFALVGVLMVSGSLNLVDIV, ILSWNWIPLFPLFIVYLISGV, GMAFAIFFLAEYANMILVAAL, AGGFFWLAVKMALVLFCFLWF, and VFIPVTLVWILVVGAWMFSPL.

This sequence belongs to the complex I subunit 1 family. In terms of assembly, NDH-1 is composed of 14 different subunits. Subunits NuoA, H, J, K, L, M, N constitute the membrane sector of the complex.

It is found in the cell inner membrane. It catalyses the reaction a quinone + NADH + 5 H(+)(in) = a quinol + NAD(+) + 4 H(+)(out). In terms of biological role, NDH-1 shuttles electrons from NADH, via FMN and iron-sulfur (Fe-S) centers, to quinones in the respiratory chain. The immediate electron acceptor for the enzyme in this species is believed to be ubiquinone. Couples the redox reaction to proton translocation (for every two electrons transferred, four hydrogen ions are translocated across the cytoplasmic membrane), and thus conserves the redox energy in a proton gradient. This subunit may bind ubiquinone. This Chromobacterium violaceum (strain ATCC 12472 / DSM 30191 / JCM 1249 / CCUG 213 / NBRC 12614 / NCIMB 9131 / NCTC 9757 / MK) protein is NADH-quinone oxidoreductase subunit H.